We begin with the raw amino-acid sequence, 206 residues long: Pyridoxine/pyridoxamine 5'-phosphate oxidase (206 aa).

Residues 53–58 (RMVLLK), 68–69 (YT), Lys-75, and Gln-97 each bind FMN. Substrate is bound at residue Lys-58. Substrate is bound by residues Tyr-115, Arg-119, and Ser-123. FMN-binding positions include 132–133 (QS) and Trp-177. Position 183–185 (183–185 (RLH)) interacts with substrate. Arg-187 contributes to the FMN binding site.

This sequence belongs to the pyridoxamine 5'-phosphate oxidase family. In terms of assembly, homodimer. The cofactor is FMN.

The enzyme catalyses pyridoxamine 5'-phosphate + O2 + H2O = pyridoxal 5'-phosphate + H2O2 + NH4(+). It carries out the reaction pyridoxine 5'-phosphate + O2 = pyridoxal 5'-phosphate + H2O2. It functions in the pathway cofactor metabolism; pyridoxal 5'-phosphate salvage; pyridoxal 5'-phosphate from pyridoxamine 5'-phosphate: step 1/1. It participates in cofactor metabolism; pyridoxal 5'-phosphate salvage; pyridoxal 5'-phosphate from pyridoxine 5'-phosphate: step 1/1. Its function is as follows. Catalyzes the oxidation of either pyridoxine 5'-phosphate (PNP) or pyridoxamine 5'-phosphate (PMP) into pyridoxal 5'-phosphate (PLP). The polypeptide is Pyridoxine/pyridoxamine 5'-phosphate oxidase (Sinorhizobium fredii (strain NBRC 101917 / NGR234)).